Here is a 115-residue protein sequence, read N- to C-terminus: Promotilin (115 aa).

The first 25 residues, 1 to 25 (MLSRKATAVLLAVHAAAMLASQTEA), serve as a signal peptide directing secretion. Positions 43-72 (RYKGQKKSLSVQQRSEEVGPVDPTEPWEEK) are disordered.

Belongs to the motilin family.

The protein resides in the secreted. Functionally, plays an important role in the regulation of interdigestive gastrointestinal motility and indirectly causes rhythmic contraction of duodenal and colonic smooth muscle. In Bos taurus (Bovine), this protein is Promotilin (MLN).